The chain runs to 406 residues: Putative phosphate permease PH0640 (406 aa).

Helical transmembrane passes span 2 to 22 (IPID…AWAI), 45 to 65 (AVLI…KTVT), 83 to 103 (VLIY…IIAT), 114 to 134 (SIIG…IVNW), 140 to 160 (VVLS…LVFR), 182 to 202 (FWIG…VLHG), 207 to 227 (IGIL…TSML), 265 to 285 (VANA…GLAG), 288 to 308 (VPVP…GVAT), 330 to 350 (FTID…GMPI), and 385 to 405 (FVTV…LLLI).

Belongs to the inorganic phosphate transporter (PiT) (TC 2.A.20) family.

It localises to the cell membrane. In terms of biological role, potential transporter for phosphate. This is Putative phosphate permease PH0640 from Pyrococcus horikoshii (strain ATCC 700860 / DSM 12428 / JCM 9974 / NBRC 100139 / OT-3).